Consider the following 290-residue polypeptide: 33 kDa chaperonin (290 aa).

Cystine bridges form between C235–C237 and C268–C271.

It belongs to the HSP33 family. Under oxidizing conditions two disulfide bonds are formed involving the reactive cysteines. Under reducing conditions zinc is bound to the reactive cysteines and the protein is inactive.

It localises to the cytoplasm. In terms of biological role, redox regulated molecular chaperone. Protects both thermally unfolding and oxidatively damaged proteins from irreversible aggregation. Plays an important role in the bacterial defense system toward oxidative stress. The polypeptide is 33 kDa chaperonin (Streptococcus pyogenes serotype M4 (strain MGAS10750)).